A 128-amino-acid polypeptide reads, in one-letter code: Azurin (128 aa).

The region spanning 1–128 (AECSVDIQGN…AMMKGTLTLK (128 aa)) is the Plastocyanin-like domain. Residues H46, C112, H117, and M121 each contribute to the Cu cation site.

Its subcellular location is the periplasm. Transfers electrons from cytochrome c551 to cytochrome oxidase. The polypeptide is Azurin (Pseudomonas denitrificans).